A 423-amino-acid polypeptide reads, in one-letter code: AP-1 complex subunit mu-1 (423 aa).

Ser2 is subject to N-acetylserine. Phosphothreonine is present on residues Thr152, Thr154, and Thr223. The MHD domain maps to Lys168–Arg421.

The protein belongs to the adaptor complexes medium subunit family. As to quaternary structure, adaptor protein complex 1 (AP-1) is a heterotetramer composed of two large adaptins (gamma-type subunit AP1G1 and beta-type subunit AP1B1), a medium adaptin (mu-type subunit AP1M1 or AP1M2) and a small adaptin (sigma-type subunit AP1S1 or AP1S2 or AP1S3). Interacts with MARCHF11. In terms of processing, phosphorylation of membrane-bound AP1M1/AP1M2 increases its affinity for sorting signals.

It localises to the cytoplasmic vesicle. Its subcellular location is the clathrin-coated vesicle membrane. The protein resides in the golgi apparatus. In terms of biological role, subunit of clathrin-associated adaptor protein complex 1 that plays a role in protein sorting in the trans-Golgi network (TGN) and endosomes. The AP complexes mediate the recruitment of clathrin to membranes and the recognition of sorting signals within the cytosolic tails of transmembrane cargo molecules. This Rattus norvegicus (Rat) protein is AP-1 complex subunit mu-1.